A 292-amino-acid chain; its full sequence is Ribosomal protein L11 methyltransferase (292 aa).

Residues Thr143, Gly164, Asp186, and Asn227 each coordinate S-adenosyl-L-methionine.

It belongs to the methyltransferase superfamily. PrmA family.

Its subcellular location is the cytoplasm. The enzyme catalyses L-lysyl-[protein] + 3 S-adenosyl-L-methionine = N(6),N(6),N(6)-trimethyl-L-lysyl-[protein] + 3 S-adenosyl-L-homocysteine + 3 H(+). In terms of biological role, methylates ribosomal protein L11. In Hahella chejuensis (strain KCTC 2396), this protein is Ribosomal protein L11 methyltransferase.